A 66-amino-acid polypeptide reads, in one-letter code: Small ribosomal subunit protein eS27 (66 aa).

Zn(2+)-binding residues include Cys-21, Cys-24, Cys-40, and Cys-43. The C4-type zinc finger occupies 21–43 (CPNCGNEQTVFSHATFPVRCLSC).

The protein belongs to the eukaryotic ribosomal protein eS27 family. As to quaternary structure, part of the 30S ribosomal subunit. Zn(2+) is required as a cofactor.

In Sulfurisphaera tokodaii (strain DSM 16993 / JCM 10545 / NBRC 100140 / 7) (Sulfolobus tokodaii), this protein is Small ribosomal subunit protein eS27.